The primary structure comprises 494 residues: Alpha-amylase B (494 aa).

An N-terminal signal peptide occupies residues 1 to 18; it reads MFLAKSIVCLALLAVANA. A Pyrrolidone carboxylic acid modification is found at Gln-19. Cys-46 and Cys-102 are disulfide-bonded. Ca(2+) contacts are provided by Asn-116, Arg-165, and Asp-174. Cys-153 and Cys-167 form a disulfide bridge. Arg-202 is a chloride binding site. The Nucleophile role is filled by Asp-204. His-208 is a binding site for Ca(2+). Glu-241 (proton donor) is an active-site residue. The chloride site is built by Asn-304 and Arg-343. Cystine bridges form between Cys-376–Cys-382 and Cys-448–Cys-460.

Belongs to the glycosyl hydrolase 13 family. As to quaternary structure, monomer. Ca(2+) serves as cofactor. The cofactor is chloride.

The catalysed reaction is Endohydrolysis of (1-&gt;4)-alpha-D-glucosidic linkages in polysaccharides containing three or more (1-&gt;4)-alpha-linked D-glucose units.. This chain is Alpha-amylase B (Amy-d), found in Drosophila yakuba (Fruit fly).